The sequence spans 371 residues: tRNA 2-selenouridine synthase (371 aa).

The Rhodanese domain occupies 12–135 (FLDDVPMMDM…MRTFLLDTTQ (124 aa)). Catalysis depends on cysteine 95, which acts as the S-selanylcysteine intermediate.

This sequence belongs to the SelU family. In terms of assembly, monomer.

It catalyses the reaction 5-methylaminomethyl-2-thiouridine(34) in tRNA + selenophosphate + (2E)-geranyl diphosphate + H2O + H(+) = 5-methylaminomethyl-2-selenouridine(34) in tRNA + (2E)-thiogeraniol + phosphate + diphosphate. The enzyme catalyses 5-methylaminomethyl-2-thiouridine(34) in tRNA + (2E)-geranyl diphosphate = 5-methylaminomethyl-S-(2E)-geranyl-thiouridine(34) in tRNA + diphosphate. It carries out the reaction 5-methylaminomethyl-S-(2E)-geranyl-thiouridine(34) in tRNA + selenophosphate + H(+) = 5-methylaminomethyl-2-(Se-phospho)selenouridine(34) in tRNA + (2E)-thiogeraniol. The catalysed reaction is 5-methylaminomethyl-2-(Se-phospho)selenouridine(34) in tRNA + H2O = 5-methylaminomethyl-2-selenouridine(34) in tRNA + phosphate. Involved in the post-transcriptional modification of the uridine at the wobble position (U34) of tRNA(Lys), tRNA(Glu) and tRNA(Gln). Catalyzes the conversion of 2-thiouridine (S2U-RNA) to 2-selenouridine (Se2U-RNA). Acts in a two-step process involving geranylation of 2-thiouridine (S2U) to S-geranyl-2-thiouridine (geS2U) and subsequent selenation of the latter derivative to 2-selenouridine (Se2U) in the tRNA chain. This Pseudomonas entomophila (strain L48) protein is tRNA 2-selenouridine synthase.